Consider the following 233-residue polypeptide: 2-amino-5-formylamino-6-ribosylaminopyrimidin-4(3H)-one 5'-monophosphate deformylase (233 aa).

Fe cation is bound by residues Glu-33, His-35, Asp-44, and His-114.

Belongs to the creatininase superfamily. FAPy deformylase family. As to quaternary structure, homodimer. Requires Fe(2+) as cofactor. Zn(2+) serves as cofactor.

The enzyme catalyses 2-amino-5-formylamino-6-(5-phospho-D-ribosylamino)pyrimidin-4(3H)-one + H2O = 2,5-diamino-6-(1-D-ribosylamino)pyrimidin-4(3H)-one 5'-phosphate + formate + H(+). The protein operates within cofactor biosynthesis; coenzyme F420 biosynthesis. It functions in the pathway cofactor biosynthesis; riboflavin biosynthesis. Catalyzes the hydrolysis of the formamide of 2-amino-5-formylamino-6-ribosylamino-4(3H)-pyrimidinone 5'-monophosphate (FAPy) to form 2,5-diamino-6-ribosylamino-4(3H)-pyrimidinone 5'-phosphate (APy). In Methanosphaera stadtmanae (strain ATCC 43021 / DSM 3091 / JCM 11832 / MCB-3), this protein is 2-amino-5-formylamino-6-ribosylaminopyrimidin-4(3H)-one 5'-monophosphate deformylase.